Consider the following 423-residue polypeptide: Mitogen-activated protein kinase 9 (423 aa).

A Protein kinase domain is found at 26–321 (YQQLKPIGSG…VDEALRHPYI (296 aa)). ATP is bound by residues 32-40 (IGSGAQGIV) and lysine 55. Aspartate 151 (proton acceptor) is an active-site residue. Threonine 183 is subject to Phosphothreonine; by MAP2K7. The TXY motif lies at 183-185 (TPY). Residue tyrosine 185 is modified to Phosphotyrosine; by MAP2K4. The segment covering 366–375 (RSKNGVKDQP) has biased composition (basic and acidic residues). Residues 366 to 423 (RSKNGVKDQPSDAAVSSKATPSQSSSINDISSMSTEHTLASDTDSSLDASTGPLEGCR) are disordered. Residues 387 to 416 (SQSSSINDISSMSTEHTLASDTDSSLDAST) show a composition bias toward low complexity.

The protein belongs to the protein kinase superfamily. CMGC Ser/Thr protein kinase family. MAP kinase subfamily. In terms of assembly, interacts with MECOM. Binds to at least four scaffolding proteins, MAPK8IP1/JIP-1, MAPK8IP2/JIP-2, MAPK8IP3/JIP-3/JSAP1 and SPAG9/MAPK8IP4/JIP-4. These proteins also bind other components of the JNK signaling pathway. Interacts with NFATC4. Interacts with ATF7; the interaction does not phosphorylate ATF7 but acts as a docking site for ATF7-associated partners such as JUN. Interacts with BCL10. Interacts with CTNNB1 and GSK3B. Interacts with DCLK2. Interacts with MAPKBP1. Interacts with POU5F1; phosphorylates POU5F1 at 'Ser-347'. Found in a complex with SH3RF1, RAC2, MAP3K7/TAK1, MAP2K7/MKK7, MAPK8IP1/JIP1 and MAPK8/JNK1. Mg(2+) serves as cofactor. Post-translationally, dually phosphorylated on Thr-183 and Tyr-185 by MAP2K7 and MAP2K4, which activates the enzyme. Autophosphorylated in vitro.

It localises to the cytoplasm. The protein resides in the nucleus. The enzyme catalyses L-seryl-[protein] + ATP = O-phospho-L-seryl-[protein] + ADP + H(+). It carries out the reaction L-threonyl-[protein] + ATP = O-phospho-L-threonyl-[protein] + ADP + H(+). Activated by threonine and tyrosine phosphorylation by either of two dual specificity kinases, MAP2K4 and MAP2K7. MAP2K4 shows a strong preference for Tyr-185 while MAP2K7 phosphorylates Tyr-183 preferentially. Inhibited by dual specificity phosphatases, such as DUSP1. Functionally, serine/threonine-protein kinase involved in various processes such as cell proliferation, differentiation, migration, transformation and programmed cell death. Extracellular stimuli such as pro-inflammatory cytokines or physical stress stimulate the stress-activated protein kinase/c-Jun N-terminal kinase (SAP/JNK) signaling pathway. In this cascade, two dual specificity kinases MAP2K4/MKK4 and MAP2K7/MKK7 phosphorylate and activate MAPK9/JNK2. In turn, MAPK9/JNK2 phosphorylates a number of transcription factors, primarily components of AP-1 such as JUN and ATF2 and thus regulates AP-1 transcriptional activity. In response to oxidative or ribotoxic stresses, inhibits rRNA synthesis by phosphorylating and inactivating the RNA polymerase 1-specific transcription initiation factor RRN3. Promotes stressed cell apoptosis by phosphorylating key regulatory factors including TP53 and YAP1. In T-cells, MAPK8 and MAPK9 are required for polarized differentiation of T-helper cells into Th1 cells. Upon T-cell receptor (TCR) stimulation, is activated by CARMA1, BCL10, MAP2K7 and MAP3K7/TAK1 to regulate JUN protein levels. Plays an important role in the osmotic stress-induced epithelial tight-junctions disruption. When activated, promotes beta-catenin/CTNNB1 degradation and inhibits the canonical Wnt signaling pathway. Also participates in neurite growth in spiral ganglion neurons. Phosphorylates the CLOCK-BMAL1 heterodimer and plays a role in the regulation of the circadian clock. Phosphorylates POU5F1, which results in the inhibition of POU5F1's transcriptional activity and enhances its proteasomal degradation. Phosphorylates ALKBH5 in response to reactive oxygen species (ROS), promoting ALKBH5 sumoylation and inactivation. The sequence is that of Mitogen-activated protein kinase 9 (Mapk9) from Rattus norvegicus (Rat).